We begin with the raw amino-acid sequence, 630 residues long: E3 ubiquitin-protein ligase TRIM41 (630 aa).

An RING-type; degenerate zinc finger spans residues 20–61; the sequence is CAICLDYFTDPVSIGCGHNFCRVCVTQLWGGEDEEDRDELDR. Residues 51-75 are compositionally biased toward acidic residues; sequence EDEEDRDELDREEEEEEVGEEEEVE. Disordered stretches follow at residues 51–97 and 148–176; these read EDEE…GDME and EDED…PPPA. Thr85 carries the post-translational modification Phosphothreonine. Acidic residues predominate over residues 148–166; it reads EDEDEEEEVLEEDEEEELD. A B box-type zinc finger spans residues 222-263; that stretch reads NEQGICPRHQEALKLFCEVDEEAICVVCRESRSHKQHSVVPL. Residues Cys227, His230, Cys249, and His255 each coordinate Zn(2+). Lys256 participates in a covalent cross-link: Glycyl lysine isopeptide (Lys-Gly) (interchain with G-Cter in SUMO2). Residues 281–374 are a coiled coil; sequence LRKHLEAVQK…AEAQERSQQG (94 aa). One can recognise a B30.2/SPRY domain in the interval 413–630; sequence LTDAIVRKMS…SKGTRIKLCP (218 aa). Ser447 bears the Phosphoserine mark. Positions 503–535 are disordered; that stretch reads ARESTHHKEKVGSGGSSVSSGDASSSRHHHRRR.

It belongs to the TRIM/RBCC family. As to quaternary structure, interacts with PRKCA. Interacts with NOD2. Interacts with TRIM17; this interaction prevents TRIM41 activity on ZSCAN2. Auto-ubiquitinated.

Its subcellular location is the cytoplasm. It localises to the nucleus. The catalysed reaction is S-ubiquitinyl-[E2 ubiquitin-conjugating enzyme]-L-cysteine + [acceptor protein]-L-lysine = [E2 ubiquitin-conjugating enzyme]-L-cysteine + N(6)-ubiquitinyl-[acceptor protein]-L-lysine.. It functions in the pathway protein modification; protein ubiquitination. In terms of biological role, E3 ligase that plays essential roles in innate antiviral response. Directly binds to influenza A virus or vesicular stomatitis virus nucleoproteins and targets them for ubiquitination and proteasomal degradation, thereby limiting viral infections. Activates the innate antiviral response by catalyzing monoubiquitination of CGAS, thereby activating CGAS. Also involved in innate antiviral response by mediating 'Lys-63'-linked polyubiquitylation of BCL10 which in turn hubs NEMO for activation of NF-kappa-B and IRF3 pathways. Catalyzes the ubiquitin-mediated degradation of other substrates including protein kinase C, ZSCAN21 or TOP3B suggesting additional roles besides its function in immune response. This is E3 ubiquitin-protein ligase TRIM41 from Mus musculus (Mouse).